We begin with the raw amino-acid sequence, 231 residues long: MKRAVVVFSGGQDSTTCLAQARHQYDEVHCVTFDYGQRHRAEIDVARDLALKLGARAHKVLDVTLLNELAVSSLTRDSIPVPDYEPNADGIPNTFVPGRNILFLTLAAIYAYQVKAEAVITGVCETDFSGYPDCRDEFVKALNHAVNLGMAKDIRFETPLMWIDKAETWALADYWGQLDLVREETLTCYNGIKGDGCGHCAACNLRANGLNHYLSNKAAVMAAMKQKTGLR.

8–18 (FSGGQDSTTCL) is an ATP binding site. Residues C188, C197, C200, and C203 each coordinate Zn(2+).

It belongs to the QueC family. Requires Zn(2+) as cofactor.

It catalyses the reaction 7-carboxy-7-deazaguanine + NH4(+) + ATP = 7-cyano-7-deazaguanine + ADP + phosphate + H2O + H(+). It functions in the pathway purine metabolism; 7-cyano-7-deazaguanine biosynthesis. Its function is as follows. Catalyzes the ATP-dependent conversion of 7-carboxy-7-deazaguanine (CDG) to 7-cyano-7-deazaguanine (preQ(0)). The chain is 7-cyano-7-deazaguanine synthase from Salmonella newport (strain SL254).